A 232-amino-acid polypeptide reads, in one-letter code: 5'-methylthioadenosine/S-adenosylhomocysteine nucleosidase (232 aa).

The active-site Proton acceptor is E12. Residues G78, I152, and 173–174 contribute to the substrate site; that span reads ME. D197 acts as the Proton donor in catalysis.

It belongs to the PNP/UDP phosphorylase family. MtnN subfamily. In terms of assembly, homodimer.

It catalyses the reaction S-adenosyl-L-homocysteine + H2O = S-(5-deoxy-D-ribos-5-yl)-L-homocysteine + adenine. The catalysed reaction is S-methyl-5'-thioadenosine + H2O = 5-(methylsulfanyl)-D-ribose + adenine. It carries out the reaction 5'-deoxyadenosine + H2O = 5-deoxy-D-ribose + adenine. It functions in the pathway amino-acid biosynthesis; L-methionine biosynthesis via salvage pathway; S-methyl-5-thio-alpha-D-ribose 1-phosphate from S-methyl-5'-thioadenosine (hydrolase route): step 1/2. In terms of biological role, catalyzes the irreversible cleavage of the glycosidic bond in both 5'-methylthioadenosine (MTA) and S-adenosylhomocysteine (SAH/AdoHcy) to adenine and the corresponding thioribose, 5'-methylthioribose and S-ribosylhomocysteine, respectively. Also cleaves 5'-deoxyadenosine, a toxic by-product of radical S-adenosylmethionine (SAM) enzymes, into 5-deoxyribose and adenine. Thus, is required for in vivo function of the radical SAM enzymes biotin synthase and lipoic acid synthase, that are inhibited by 5'-deoxyadenosine accumulation. This chain is 5'-methylthioadenosine/S-adenosylhomocysteine nucleosidase, found in Salmonella paratyphi A (strain ATCC 9150 / SARB42).